A 344-amino-acid chain; its full sequence is Nuclear distribution protein nudE-like 1-B (344 aa).

Residues 13–190 (KEEIVYWREL…LAVRERQTDG (178 aa)) are a coiled coil. Disordered regions lie at residues 186 to 209 (RQTD…TDSS) and 325 to 344 (PPGV…PLSV). The span at 333-344 (PPSPPGLLPLSV) shows a compositional bias: pro residues.

Belongs to the nudE family. Post-translationally, phosphorylated in mitosis.

The protein resides in the cytoplasm. It localises to the cytoskeleton. It is found in the microtubule organizing center. The protein localises to the centrosome. Its subcellular location is the spindle. In terms of biological role, required for organization of the cellular microtubule array and microtubule anchoring at the centrosome. Positively regulates the activity of the minus-end directed microtubule motor protein dynein. May enhance dynein-mediated microtubule sliding by targeting dynein to the microtubule plus end. Positively regulates lysosome peripheral distribution and ruffled border formation in osteoclasts. In Xenopus laevis (African clawed frog), this protein is Nuclear distribution protein nudE-like 1-B (ndel1-b).